Reading from the N-terminus, the 221-residue chain is uncharacterized protein (221 aa).

Transmembrane regions (helical) follow at residues 30–50 (FGIF…LPLA), 62–82 (AGVV…LYWI), 144–164 (VWVF…VYVY), and 179–199 (ILDQ…LLYL).

The protein belongs to the DedA family.

Its subcellular location is the cell membrane. This is an uncharacterized protein from Bacillus subtilis (strain 168).